The following is a 41-amino-acid chain: uncharacterized protein (41 aa).

Positions 1–41 (MGKKHRNRITGQKKNNHIPEKDIIAAEEAHGKEYSAAKRKP) are disordered. Over residues 17-41 (HIPEKDIIAAEEAHGKEYSAAKRKP) the composition is skewed to basic and acidic residues.

This is an uncharacterized protein from Bacillus subtilis (strain 168).